The chain runs to 273 residues: Undecaprenyl-diphosphatase (273 aa).

Helical transmembrane passes span 6 to 26 (SLLI…LPVS), 45 to 65 (AKTF…VMFW), 90 to 110 (LTLI…LLFH), 116 to 136 (LFNP…LIAA), 190 to 210 (YAAS…ATAL), 222 to 242 (GDIP…LIAI), and 252 to 272 (ISFI…YVVF).

Belongs to the UppP family.

The protein resides in the cell inner membrane. The enzyme catalyses di-trans,octa-cis-undecaprenyl diphosphate + H2O = di-trans,octa-cis-undecaprenyl phosphate + phosphate + H(+). Catalyzes the dephosphorylation of undecaprenyl diphosphate (UPP). Confers resistance to bacitracin. This chain is Undecaprenyl-diphosphatase, found in Escherichia coli O7:K1 (strain IAI39 / ExPEC).